The primary structure comprises 88 residues: Large ribosomal subunit protein bL27 (88 aa).

The tract at residues 1 to 26 is disordered; it reads MAHKKGASSSSNGRDSEAKRLGVKRF.

Belongs to the bacterial ribosomal protein bL27 family.

This Corynebacterium glutamicum (strain R) protein is Large ribosomal subunit protein bL27.